A 464-amino-acid polypeptide reads, in one-letter code: Cysteine--tRNA ligase (464 aa).

Cys29 is a Zn(2+) binding site. A 'HIGH' region motif is present at residues 31 to 41 (PTVYDFAHIGN). Residues Cys224, His249, and Glu253 each coordinate Zn(2+). Positions 282–286 (KMSKS) match the 'KMSKS' region motif. ATP is bound at residue Lys285.

This sequence belongs to the class-I aminoacyl-tRNA synthetase family. In terms of assembly, monomer. The cofactor is Zn(2+).

It is found in the cytoplasm. The catalysed reaction is tRNA(Cys) + L-cysteine + ATP = L-cysteinyl-tRNA(Cys) + AMP + diphosphate. The protein is Cysteine--tRNA ligase of Afipia carboxidovorans (strain ATCC 49405 / DSM 1227 / KCTC 32145 / OM5) (Oligotropha carboxidovorans).